The chain runs to 196 residues: Ribosome maturation factor RimP (196 aa).

Residues 164 to 196 (LAPQKPNKPGPKKPGHEKKKPSNESAAGKPRAE) form a disordered region. The segment covering 173–182 (GPKKPGHEKK) has biased composition (basic residues).

Belongs to the RimP family.

Its subcellular location is the cytoplasm. Functionally, required for maturation of 30S ribosomal subunits. The chain is Ribosome maturation factor RimP from Xanthomonas axonopodis pv. citri (strain 306).